We begin with the raw amino-acid sequence, 264 residues long: Protein ADMETOS (264 aa).

In terms of tissue distribution, paternally imprinted expression in the endosperm.

Product of a dosage-sensitive gene that contributes to the maintenance of paternally and maternally imprinted gene expression in the endosperm in order to balance parental contributions. Underlies postzygotic reproductive isolation by promoting triploid seed arrest in a genetic dosage-dependent manner, thus being a component of postzygotic interploidy hybridization barriers. In Arabidopsis thaliana (Mouse-ear cress), this protein is Protein ADMETOS.